A 232-amino-acid polypeptide reads, in one-letter code: Ribonuclease 3 (232 aa).

Positions 5-134 (QTVLKNHFEI…FLGALLLDKD (130 aa)) constitute an RNase III domain. Glu-47 contributes to the Mg(2+) binding site. Asp-51 is an active-site residue. Residues Asp-120 and Glu-123 each coordinate Mg(2+). Residue Glu-123 is part of the active site. Positions 160–229 (DYKTHLQELL…AKNAVEKGLD (70 aa)) constitute a DRBM domain.

This sequence belongs to the ribonuclease III family. Homodimer. Requires Mg(2+) as cofactor.

It is found in the cytoplasm. It carries out the reaction Endonucleolytic cleavage to 5'-phosphomonoester.. Functionally, digests double-stranded RNA. Involved in the processing of primary rRNA transcript to yield the immediate precursors to the large and small rRNAs (23S and 16S). Processes some mRNAs, and tRNAs when they are encoded in the rRNA operon. Processes pre-crRNA and tracrRNA of type II CRISPR loci if present in the organism. This Streptococcus pneumoniae (strain ATCC BAA-255 / R6) protein is Ribonuclease 3.